The chain runs to 139 residues: Thioredoxin 2 (139 aa).

A zinc finger spans residues 5–18; the sequence is CTHCQAINRIPDDR. A Thioredoxin domain is found at 26-139; the sequence is GRCGHDLFDG…PFDSWLNESL (114 aa). Cysteines 64 and 67 form a disulfide.

The protein belongs to the thioredoxin family.

It localises to the cytoplasm. It carries out the reaction [protein]-dithiol + NAD(+) = [protein]-disulfide + NADH + H(+). The enzyme catalyses [protein]-dithiol + NADP(+) = [protein]-disulfide + NADPH + H(+). Efficient electron donor for the essential enzyme ribonucleotide reductase. Is also able to reduce the interchain disulfide bridges of insulin. The sequence is that of Thioredoxin 2 (trxC) from Escherichia coli O6:H1 (strain CFT073 / ATCC 700928 / UPEC).